The sequence spans 282 residues: uncharacterized protein (282 aa).

The next 4 membrane-spanning stretches (helical) occupy residues 130–150, 170–190, 191–211, and 223–243; these read WALL…GFGL, STSW…WPSA, AAGL…YVIV, and ILTH…WRSA. Positions 263 to 282 are disordered; the sequence is DNASRGRRRGHLWPTDGSAA.

It is found in the cell membrane. This is an uncharacterized protein from Mycobacterium tuberculosis (strain CDC 1551 / Oshkosh).